The following is a 115-amino-acid chain: Cyclin-dependent protein kinase inhibitor SMR3 (115 aa).

Residues 17–36 (KIRLPTRPELDIPDSDHEDP) are compositionally biased toward basic and acidic residues. The segment at 17 to 82 (KIRLPTRPEL…RSSGTKRKLT (66 aa)) is disordered. A compositionally biased stretch (basic residues) spans 67 to 81 (RKPKPNRSSGTKRKL).

In terms of assembly, interacts with CDKA-1 and D-type cyclins. As to expression, expressed at low levels in roots and stems.

It localises to the nucleus. Functionally, probable cyclin-dependent protein kinase (CDK) inhibitor that functions as a repressor of mitosis in the endoreduplication cell cycle. The protein is Cyclin-dependent protein kinase inhibitor SMR3 of Arabidopsis thaliana (Mouse-ear cress).